Here is a 346-residue protein sequence, read N- to C-terminus: Nicotinate-nucleotide--dimethylbenzimidazole phosphoribosyltransferase (346 aa).

Residue Glu312 is the Proton acceptor of the active site.

This sequence belongs to the CobT family.

It carries out the reaction 5,6-dimethylbenzimidazole + nicotinate beta-D-ribonucleotide = alpha-ribazole 5'-phosphate + nicotinate + H(+). It functions in the pathway nucleoside biosynthesis; alpha-ribazole biosynthesis; alpha-ribazole from 5,6-dimethylbenzimidazole: step 1/2. Its function is as follows. Catalyzes the synthesis of alpha-ribazole-5'-phosphate from nicotinate mononucleotide (NAMN) and 5,6-dimethylbenzimidazole (DMB). The sequence is that of Nicotinate-nucleotide--dimethylbenzimidazole phosphoribosyltransferase from Cupriavidus necator (strain ATCC 17699 / DSM 428 / KCTC 22496 / NCIMB 10442 / H16 / Stanier 337) (Ralstonia eutropha).